The following is a 356-amino-acid chain: MVAVERVESLAKSGIISIPKEYIRPKEELESINDVFLEEKKEDGPQVPTIDLKNIESDDEKIRENCIEELKKASLDWGVMHLINHGIPADLMERVKKAGEEFFSLSVEEKEKYANDQATGKIQGYGSKLANNASGQLEWEDYFFHLAYPEEKRDLSIWPKTPSDYIEATSEYAKCLRLLATKVFKALSVGLGLEPDRLEKEVGGLEELLLQMKINYYPKCPQPELALGVEAHTDVSALTFILHNMVPGLQLFYEGKWVTAKCVPDSIVMHIGDTLEILSNGKYKSILHRGLVNKEKVRISWAVFCEPPKDKIVLKPLPEMVSVESPAKFPPRTFAQHIEHKLFGKEQEELVSEKND.

Residues tyrosine 142 and lysine 213 each coordinate substrate. A Fe2OG dioxygenase domain is found at 208–307; it reads LLLQMKINYY…RISWAVFCEP (100 aa). 215-217 provides a ligand contact to 2-oxoglutarate; that stretch reads NYY. Histidine 232 provides a ligand contact to Fe cation. Threonine 233 contacts substrate. Residues aspartate 234 and histidine 288 each contribute to the Fe cation site. 298–300 lines the 2-oxoglutarate pocket; sequence RIS. Residues glutamate 306 and lysine 341 each coordinate substrate.

The protein belongs to the iron/ascorbate-dependent oxidoreductase family. It depends on L-ascorbate as a cofactor. Fe(2+) is required as a cofactor. As to expression, expressed in young seedlings (at protein level).

It catalyses the reaction a (2R,3S,4S)-leucoanthocyanidin + 2-oxoglutarate + O2 = a 4-H-anthocyanidin with a 3-hydroxy group + succinate + CO2 + 2 H2O. The catalysed reaction is (2R,3S,4S)-3,4-leucopelargonidin + 2-oxoglutarate + O2 = (4S)-2,3-dehydroleucopelargonidin + succinate + CO2 + H2O + H(+). The enzyme catalyses (2R,3S,4S)-leucocyanidin + 2-oxoglutarate + O2 = (4S)-2,3-dehydroleucocyanidin + succinate + CO2 + H2O + H(+). It functions in the pathway pigment biosynthesis; anthocyanin biosynthesis. Its function is as follows. Involved in anthocyanin and protoanthocyanidin biosynthesis by catalyzing the oxidation of leucoanthocyanidins into anthocyanidins. Possesses low flavonol synthase activity in vitro towards dihydrokaempferol and dihydroquercetin producing kaempferol and quercitin, respectively. The sequence is that of Leucoanthocyanidin dioxygenase (LDOX) from Arabidopsis thaliana (Mouse-ear cress).